The following is a 72-amino-acid chain: Exodeoxyribonuclease 7 small subunit (72 aa).

The protein belongs to the XseB family. As to quaternary structure, heterooligomer composed of large and small subunits.

It localises to the cytoplasm. It carries out the reaction Exonucleolytic cleavage in either 5'- to 3'- or 3'- to 5'-direction to yield nucleoside 5'-phosphates.. Functionally, bidirectionally degrades single-stranded DNA into large acid-insoluble oligonucleotides, which are then degraded further into small acid-soluble oligonucleotides. This Chlamydia muridarum (strain MoPn / Nigg) protein is Exodeoxyribonuclease 7 small subunit.